We begin with the raw amino-acid sequence, 482 residues long: Probable cytochrome P450 508D1 (482 aa).

A helical transmembrane segment spans residues Met-1–Lys-21. Cys-428 lines the heme pocket.

The protein belongs to the cytochrome P450 family. It depends on heme as a cofactor.

Its subcellular location is the membrane. In Dictyostelium discoideum (Social amoeba), this protein is Probable cytochrome P450 508D1 (cyp508D1).